Consider the following 710-residue polypeptide: Polyribonucleotide nucleotidyltransferase (710 aa).

Residues Asp-501 and Asp-507 each coordinate Mg(2+). The KH domain maps to 568–628 (PKVQMFQIKP…ETVKQAILFI (61 aa)). The S1 motif domain occupies 638 to 710 (NSIYHAHISR…RIDFVLISKK (73 aa)).

The protein belongs to the polyribonucleotide nucleotidyltransferase family. It depends on Mg(2+) as a cofactor.

Its subcellular location is the cytoplasm. It catalyses the reaction RNA(n+1) + phosphate = RNA(n) + a ribonucleoside 5'-diphosphate. Functionally, involved in mRNA degradation. Catalyzes the phosphorolysis of single-stranded polyribonucleotides processively in the 3'- to 5'-direction. The polypeptide is Polyribonucleotide nucleotidyltransferase (Phytoplasma australiense).